The primary structure comprises 523 residues: Beta-glucosidase 31 (523 aa).

The signal sequence occupies residues 1-22 (MTPARVVFICCVVLLAAAAAAA). Residues Gln49, His149, and 194–195 (NE) contribute to the a beta-D-glucoside site. Catalysis depends on Glu195, which acts as the Proton donor. Cysteines 214 and 223 form a disulfide. N-linked (GlcNAc...) asparagine glycosylation is present at Asn227. Positions 339 and 413 each coordinate a beta-D-glucoside. The active-site Nucleophile is the Glu413. Asn450 is a glycosylation site (N-linked (GlcNAc...) asparagine). Residues Trp460, 467-468 (EY), and Phe476 contribute to the a beta-D-glucoside site.

The protein belongs to the glycosyl hydrolase 1 family.

It catalyses the reaction Hydrolysis of terminal, non-reducing beta-D-glucosyl residues with release of beta-D-glucose.. The sequence is that of Beta-glucosidase 31 (BGLU31) from Oryza sativa subsp. japonica (Rice).